The chain runs to 188 residues: UPF0461 protein C5orf24 homolog (188 aa).

Serine 37 carries the phosphoserine modification. Lysine 75 participates in a covalent cross-link: Glycyl lysine isopeptide (Lys-Gly) (interchain with G-Cter in SUMO2). Over residues 80–92 the composition is skewed to basic residues; sequence KKKNLNRSGKRGR. Residues 80-141 are disordered; that stretch reads KKKNLNRSGK…AGYKVSPGRP (62 aa). Positions 94 to 107 are enriched in polar residues; the sequence is SGTTKSAGYRTSTG. Serine 121 and serine 180 each carry phosphoserine. A Glycyl lysine isopeptide (Lys-Gly) (interchain with G-Cter in SUMO2) cross-link involves residue lysine 184.

The protein belongs to the UPF0461 family.

This chain is UPF0461 protein C5orf24 homolog, found in Mus musculus (Mouse).